Reading from the N-terminus, the 39-residue chain is Photosystem II reaction center protein L (39 aa).

Residues 18–38 traverse the membrane as a helical segment; it reads SLYLGLLIVFTTGILFSSYFF.

This sequence belongs to the PsbL family. As to quaternary structure, PSII is composed of 1 copy each of membrane proteins PsbA, PsbB, PsbC, PsbD, PsbE, PsbF, PsbH, PsbI, PsbJ, PsbK, PsbL, PsbM, PsbT, PsbX, PsbY, PsbZ, Psb30/Ycf12, peripheral proteins PsbO, CyanoQ (PsbQ), PsbU, PsbV and a large number of cofactors. It forms dimeric complexes.

The protein resides in the cellular thylakoid membrane. Functionally, one of the components of the core complex of photosystem II (PSII). PSII is a light-driven water:plastoquinone oxidoreductase that uses light energy to abstract electrons from H(2)O, generating O(2) and a proton gradient subsequently used for ATP formation. It consists of a core antenna complex that captures photons, and an electron transfer chain that converts photonic excitation into a charge separation. This subunit is found at the monomer-monomer interface and is required for correct PSII assembly and/or dimerization. The protein is Photosystem II reaction center protein L of Synechococcus sp. (strain CC9311).